A 244-amino-acid polypeptide reads, in one-letter code: Biosynthetic peptidoglycan transglycosylase (244 aa).

A helical transmembrane segment spans residues 25 to 45 (LLLLLAIALLYQSWFLLHIIY).

Belongs to the glycosyltransferase 51 family.

The protein localises to the cell inner membrane. The enzyme catalyses [GlcNAc-(1-&gt;4)-Mur2Ac(oyl-L-Ala-gamma-D-Glu-L-Lys-D-Ala-D-Ala)](n)-di-trans,octa-cis-undecaprenyl diphosphate + beta-D-GlcNAc-(1-&gt;4)-Mur2Ac(oyl-L-Ala-gamma-D-Glu-L-Lys-D-Ala-D-Ala)-di-trans,octa-cis-undecaprenyl diphosphate = [GlcNAc-(1-&gt;4)-Mur2Ac(oyl-L-Ala-gamma-D-Glu-L-Lys-D-Ala-D-Ala)](n+1)-di-trans,octa-cis-undecaprenyl diphosphate + di-trans,octa-cis-undecaprenyl diphosphate + H(+). It functions in the pathway cell wall biogenesis; peptidoglycan biosynthesis. Peptidoglycan polymerase that catalyzes glycan chain elongation from lipid-linked precursors. This chain is Biosynthetic peptidoglycan transglycosylase, found in Nitrosomonas eutropha (strain DSM 101675 / C91 / Nm57).